The sequence spans 293 residues: MEKCFNIIPSLLLISLLIKSSNAAGIAVYWGQNGNEGSLQDACNTNNYQFVNIAFLSTFGNGQNPQINLAGHCDPSTNGCTKFSPEIQACQAKGIKVLLSLGGGAGSYSLNSAEEATTLANYLWNNFLGGTSTSRPLGDAVLDGIDFDIESGGQHYDELAKALNGFSQQKVYLSAAPQCPYPDAHLDSAIQTGLFDYVWVQFYNNPQCQYSNGNINNLVNAWNQWTSSQAKQVFLGVPASDAAAPSGGLIPADVLTSQVLPAIKTSPKYGGVMIWDRFNDAQSGYSNAIKGSV.

Positions 1 to 22 (MEKCFNIIPSLLLISLLIKSSN) are cleaved as a signal peptide. The GH18 domain occupies 24–293 (AGIAVYWGQN…GYSNAIKGSV (270 aa)). 2 disulfide bridges follow: cysteine 43/cysteine 90 and cysteine 73/cysteine 80. The active-site Proton donor is glutamate 150. Cysteines 179 and 208 form a disulfide.

This sequence belongs to the glycosyl hydrolase 18 family. Chitinase class II subfamily.

Its subcellular location is the secreted. It is found in the extracellular space. It carries out the reaction Random endo-hydrolysis of N-acetyl-beta-D-glucosaminide (1-&gt;4)-beta-linkages in chitin and chitodextrins.. In terms of biological role, this protein functions as a defense against chitin containing fungal pathogens. The sequence is that of Acidic endochitinase from Cicer arietinum (Chickpea).